Reading from the N-terminus, the 367-residue chain is 4-hydroxy-3-methylbut-2-en-1-yl diphosphate synthase (flavodoxin) (367 aa).

[4Fe-4S] cluster-binding residues include cysteine 268, cysteine 271, cysteine 303, and glutamate 310.

This sequence belongs to the IspG family. The cofactor is [4Fe-4S] cluster.

It carries out the reaction (2E)-4-hydroxy-3-methylbut-2-enyl diphosphate + oxidized [flavodoxin] + H2O + 2 H(+) = 2-C-methyl-D-erythritol 2,4-cyclic diphosphate + reduced [flavodoxin]. It participates in isoprenoid biosynthesis; isopentenyl diphosphate biosynthesis via DXP pathway; isopentenyl diphosphate from 1-deoxy-D-xylulose 5-phosphate: step 5/6. Its function is as follows. Converts 2C-methyl-D-erythritol 2,4-cyclodiphosphate (ME-2,4cPP) into 1-hydroxy-2-methyl-2-(E)-butenyl 4-diphosphate. This Halalkalibacterium halodurans (strain ATCC BAA-125 / DSM 18197 / FERM 7344 / JCM 9153 / C-125) (Bacillus halodurans) protein is 4-hydroxy-3-methylbut-2-en-1-yl diphosphate synthase (flavodoxin).